Reading from the N-terminus, the 304-residue chain is N-carbamoyl-D-amino acid hydrolase (304 aa).

The region spanning M5–L276 is the CN hydrolase domain. Catalysis depends on residues E47, K127, and C172.

It carries out the reaction an N-carbamoyl-D-amino acid + H2O + 2 H(+) = a D-alpha-amino acid + NH4(+) + CO2. Functionally, the enzyme catalyzes the hydrolysis of N-carbamoyl-D-amino acids to the corresponding which are useful intermediates in the preparation of beta-lactam antibiotics. Industrial production of beta-lactam antibiotics is now being developed using this enzyme. In Agrobacterium sp. (strain KNK712), this protein is N-carbamoyl-D-amino acid hydrolase.